We begin with the raw amino-acid sequence, 216 residues long: RNA pyrophosphohydrolase (216 aa).

The 144-residue stretch at 6 to 149 folds into the Nudix hydrolase domain; it reads GFRPNVGIIL…KRDVYQLALT (144 aa). Positions 38–59 match the Nudix box motif; the sequence is GGIKYGETPMQAMYRELHEETG. Residues 159–180 form a disordered region; it reads AQRTDKSRGPRAPRYPRVSNGH.

This sequence belongs to the Nudix hydrolase family. RppH subfamily. Requires a divalent metal cation as cofactor.

In terms of biological role, accelerates the degradation of transcripts by removing pyrophosphate from the 5'-end of triphosphorylated RNA, leading to a more labile monophosphorylated state that can stimulate subsequent ribonuclease cleavage. The protein is RNA pyrophosphohydrolase of Burkholderia thailandensis (strain ATCC 700388 / DSM 13276 / CCUG 48851 / CIP 106301 / E264).